We begin with the raw amino-acid sequence, 332 residues long: 2,3-diketo-L-gulonate reductase (332 aa).

His-44 serves as the catalytic Proton donor. NAD(+)-binding positions include 168-174 (ITMVDMS), 224-225 (WK), and 304-306 (GHE).

This sequence belongs to the LDH2/MDH2 oxidoreductase family. DlgD subfamily. Homodimer.

Its subcellular location is the cytoplasm. It carries out the reaction 3-dehydro-L-gulonate + NAD(+) = 2,3-dioxo-L-gulonate + NADH + H(+). The enzyme catalyses 3-dehydro-L-gulonate + NADP(+) = 2,3-dioxo-L-gulonate + NADPH + H(+). In terms of biological role, catalyzes the reduction of 2,3-diketo-L-gulonate in the presence of NADH, to form 3-keto-L-gulonate. This chain is 2,3-diketo-L-gulonate reductase, found in Escherichia coli O1:K1 / APEC.